A 295-amino-acid polypeptide reads, in one-letter code: Phosphatidylglycerol--prolipoprotein diacylglyceryl transferase (295 aa).

Transmembrane regions (helical) follow at residues 28 to 48, 69 to 89, 101 to 121, and 131 to 151; these read WYALAYIAGIVIAWRLAVLAT, LLTWIILGVILGGRLGFVLFY, ILMVWQGGMAFHGGLLGVVIA, and IPKLSLADLITHTVAPGLLLG. R152 contributes to the a 1,2-diacyl-sn-glycero-3-phospho-(1'-sn-glycerol) binding site. 3 helical membrane-spanning segments follow: residues 195 to 215, 224 to 244, and 268 to 288; these read QLYEAALEGLLLGTLLLWLVW, GLITGVFLAGYGLSRFVVEFF, and GLTMGQLLSLPMIALGLWFVL.

This sequence belongs to the Lgt family.

It localises to the cell inner membrane. It catalyses the reaction L-cysteinyl-[prolipoprotein] + a 1,2-diacyl-sn-glycero-3-phospho-(1'-sn-glycerol) = an S-1,2-diacyl-sn-glyceryl-L-cysteinyl-[prolipoprotein] + sn-glycerol 1-phosphate + H(+). Its pathway is protein modification; lipoprotein biosynthesis (diacylglyceryl transfer). Its function is as follows. Catalyzes the transfer of the diacylglyceryl group from phosphatidylglycerol to the sulfhydryl group of the N-terminal cysteine of a prolipoprotein, the first step in the formation of mature lipoproteins. The protein is Phosphatidylglycerol--prolipoprotein diacylglyceryl transferase of Ruegeria pomeroyi (strain ATCC 700808 / DSM 15171 / DSS-3) (Silicibacter pomeroyi).